The chain runs to 282 residues: Putative phosphoesterase 244L (282 aa).

A divalent metal cation-binding residues include Asp45, Asn80, and His203.

This sequence belongs to the metallophosphoesterase superfamily. IIV-6 244L family.

The protein is Putative phosphoesterase 244L of Invertebrate iridescent virus 6 (IIV-6).